Reading from the N-terminus, the 324-residue chain is Myb-like DNA-binding protein myb-1 (324 aa).

2 consecutive HTH myb-type domains span residues 4-59 and 60-110; these read MPDQ…KPGL and NHGP…NRKK. A disordered region spans residues 107–231; that stretch reads NRKKNQLRRQ…PTGSTLRLLT (125 aa). Positions 155 to 165 are enriched in polar residues; it reads RRPSSPSSFND. A compositionally biased stretch (basic and acidic residues) spans 166-175; the sequence is SLHHRVHESI. Low complexity-rich tracts occupy residues 183-192 and 222-231; these read QQQQQQQQQQ and PTGSTLRLLT.

It localises to the nucleus. This is Myb-like DNA-binding protein myb-1 (rca-1) from Neurospora crassa (strain ATCC 24698 / 74-OR23-1A / CBS 708.71 / DSM 1257 / FGSC 987).